Consider the following 188-residue polypeptide: Ribosome-recycling factor (188 aa).

The protein belongs to the RRF family.

The protein localises to the cytoplasm. In terms of biological role, responsible for the release of ribosomes from messenger RNA at the termination of protein biosynthesis. May increase the efficiency of translation by recycling ribosomes from one round of translation to another. The polypeptide is Ribosome-recycling factor (Blochmanniella pennsylvanica (strain BPEN)).